The sequence spans 161 residues: Nucleotide-binding protein Swoo_3646 (161 aa).

This sequence belongs to the YajQ family.

Its function is as follows. Nucleotide-binding protein. The protein is Nucleotide-binding protein Swoo_3646 of Shewanella woodyi (strain ATCC 51908 / MS32).